Consider the following 340-residue polypeptide: Gallate dioxygenase (340 aa).

Residue histidine 45 is the Proton donor of the active site. Histidine 113 (proton acceptor) is an active-site residue.

The protein belongs to the LigB/MhpB extradiol dioxygenase family. Fe(2+) serves as cofactor.

The catalysed reaction is 3,4,5-trihydroxybenzoate + O2 = (1E)-4-oxobut-1-ene-1,2,4-tricarboxylate + 2 H(+). Functionally, ring-cleavage dioxygenase that acts specifically on gallate to produce the keto-tautomer of 4-oxalomesaconate. Mediates the first step of gallate degradation pathway. The sequence is that of Gallate dioxygenase (galA) from Pseudomonas putida (strain ATCC 47054 / DSM 6125 / CFBP 8728 / NCIMB 11950 / KT2440).